The sequence spans 501 residues: Lysine--tRNA ligase (501 aa).

Glutamate 412 and glutamate 419 together coordinate Mg(2+).

Belongs to the class-II aminoacyl-tRNA synthetase family. As to quaternary structure, homodimer. Requires Mg(2+) as cofactor.

It is found in the cytoplasm. The enzyme catalyses tRNA(Lys) + L-lysine + ATP = L-lysyl-tRNA(Lys) + AMP + diphosphate. The sequence is that of Lysine--tRNA ligase (lysS) from Pasteurella multocida (strain Pm70).